A 407-amino-acid polypeptide reads, in one-letter code: MNDTERNMVERTSKFLLIVVGSVFFMLILYQYVAPGVINFGSPHGYLLGEEDMTIFPTPDPHYVKKYYFPIKDLERKIDFEIKGEDVIVFLHIQKTGGTTFGRHLVQNVRLELPCDCRPGQKKCTCYRPNRKETWLFSRFSTGWSCGLHADWTELTNCVPGVLNKRESKSKKMRKFYYITLLRDPVSRYLSEWRHVQRGATWKTSLHMCDGRTPTPEELPPCYEGTDWSGCTLQQFMDCPYNLANNRQVRMLADLSLVGCYNLSTVPEKRRSQLLLESAKKNLRDMAFYGLTEFQRKTQYLFERTFHLKFIRPFMQYNSTRAAGVDLDNDTIQRIEELNDLDMKLYDYAKDLFQQRYQYKHMLDRREQRLLRGHASFHSPFREDGAGGEGTARLPTEDYMNHIINGW.

The Cytoplasmic portion of the chain corresponds to 8-14 (MVERTSK). The chain crosses the membrane as a helical; Signal-anchor for type II membrane protein span at residues 15–35 (FLLIVVGSVFFMLILYQYVAP). Residues 36 to 407 (GVINFGSPHG…DYMNHIINGW (372 aa)) lie on the Lumenal side of the membrane. Residue 92–100 (HIQKTGGTT) coordinates 3'-phosphoadenylyl sulfate. Residues 122 to 123 (KK), Arg139, Trp144, and His149 each bind substrate. The active-site Proton acceptor is His149. Residues Arg183 and Ser191 each coordinate 3'-phosphoadenylyl sulfate. Residues His195 and Trp202 each coordinate substrate. A glycan (N-linked (GlcNAc...) asparagine) is linked at Asn262. Residue 315-317 (MQY) coordinates 3'-phosphoadenylyl sulfate. N-linked (GlcNAc...) asparagine glycosylation is present at Asn318. 321–322 (RA) lines the 3'-phosphoadenylyl sulfate pocket. A glycan (N-linked (GlcNAc...) asparagine) is linked at Asn329.

Belongs to the sulfotransferase 6 family. During early somitogenesis, first expressed in floor plate and somites. During mid-somitogenesis, expressed strongly in somites and more weakly in eye and hindbrain. During late somitogenesis, expressed in eye, hindbrain and posterior somites. At 24 hours post-fertilization (hpf), expressed in lens, forebrain, hindbrain, otic vesicle, anterior spinal cord neurons and posterior somites. At 36 hpf, expressed in the retinal ciliary marginal zone, brain, pancreas and weakly in pectoral fin. At 48 hpf, expressed in the retinal ciliary marginal zone, retinal ganglion cells, rhombomeres, otic vesicle and weakly in pectoral fin.

The protein localises to the membrane. The catalysed reaction is alpha-D-glucosaminyl-[heparan sulfate](n) + 3'-phosphoadenylyl sulfate = 6-sulfo-alpha-D-glucosaminyl-[heparan sulfate](n) + adenosine 3',5'-bisphosphate + H(+). In terms of biological role, 6-O-sulfation enzyme which catalyzes the transfer of sulfate from 3'-phosphoadenosine 5'-phosphosulfate (PAPS) to position 6 of the N-sulfoglucosamine residue (GlcNS) of heparan sulfate. This Danio rerio (Zebrafish) protein is Heparan-sulfate 6-O-sulfotransferase 1-B.